The sequence spans 409 residues: BRCA1-A complex subunit Abraxas 1 (409 aa).

Residues 7-160 form the MPN domain; the sequence is SAVLSGFVLG…HSLYKPQKGL (154 aa). A Phosphoserine modification is found at Ser-48. Residues 206–260 are a coiled coil; sequence DGSLKEVHKINEMYASLQEELKSICKKVEDSEQAVDKLVKDVNRLKREIEKRRGA. The span at 362–372 shows a compositional bias: basic and acidic residues; it reads LLDTQDKRSKA. The segment at 362–409 is disordered; the sequence is LLDTQDKRSKADTGSSNQDKASKMSSPETDEEIEKMKGFGEYSRSPTF. The span at 373-388 shows a compositional bias: polar residues; sequence DTGSSNQDKASKMSSP. A phosphoserine mark is found at Ser-386 and Ser-387. At Thr-390 the chain carries Phosphothreonine. Ser-404 and Ser-406 each carry phosphoserine. Residues 406 to 409 carry the pSXXF motif motif; the sequence is SPTF.

Belongs to the FAM175 family. Abraxas subfamily. Component of the ARISC complex, at least composed of UIMC1/RAP80, ABRAXAS1, BRCC3/BRCC36, BABAM2 and BABAM1/NBA1. Component of the BRCA1-A complex, at least composed of BRCA1, BARD1, UIMC1/RAP80, ABRAXAS1, BRCC3/BRCC36, BABAM2 and BABAM1/NBA1. In the complex, interacts directly with UIMC1/RAP80, BRCC3/BRCC36 and BABAM2. Interacts directly (when phosphorylated at Ser-406) with BRCA1. Homodimer. The homodimer interacts directly (when phosphorylated at Ser-404 and Ser-406) with two BRCA1 chains, giving rise to a heterotetramer. Binds polyubiquitin. Post-translationally, phosphorylation of Ser-406 of the pSXXF motif by ATM or ATR constitutes a specific recognition motif for the BRCT domain of BRCA1. Ionizing radiation promotes rapid phosphorylation at Ser-404 and Ser-406 by ATM; this promotes recruitment of BRCA1 to sites of DNA damage.

The protein localises to the nucleus. Involved in DNA damage response and double-strand break (DSB) repair. Component of the BRCA1-A complex, acting as a central scaffold protein that assembles the various components of the complex and mediates the recruitment of BRCA1. The BRCA1-A complex specifically recognizes 'Lys-63'-linked ubiquitinated histones H2A and H2AX at DNA lesion sites, leading to target the BRCA1-BARD1 heterodimer to sites of DNA damage at DSBs. This complex also possesses deubiquitinase activity that specifically removes 'Lys-63'-linked ubiquitin on histones H2A and H2AX. This chain is BRCA1-A complex subunit Abraxas 1, found in Homo sapiens (Human).